Reading from the N-terminus, the 311-residue chain is Syndecan-1 (311 aa).

The signal sequence occupies residues 1-22 (MRRAALWLWLCALALRLQPALL). Over 23 to 255 (HSVAVNMPPE…GLLDRKEVLG (233 aa)) the chain is Extracellular. 2 disordered regions span residues 31-85 (PEDQ…PDAI) and 141-244 (TMAP…TGAS). The segment covering 32 to 42 (EDQDGSGDDSD) has biased composition (acidic residues). Serine 37 is a glycosylation site (O-linked (Xyl...) (chondroitin sulfate) serine). A glycan (N-linked (GlcNAc...) asparagine) is linked at asparagine 43. Serine 45 and serine 47 each carry an O-linked (Xyl...) (heparan sulfate) serine glycan. Residues 71 to 84 (TTTATAPEPTSPDA) show a composition bias toward low complexity. Basic and acidic residues-rich tracts occupy residues 151–162 (PHRDVQPDHHET) and 169–180 (GRMEPHRPHVEE). Residues serine 204 and serine 214 are each glycosylated (O-linked (Xyl...) (chondroitin sulfate) serine). Residues 215–226 (GENAAGAAGEPG) are compositionally biased toward low complexity. A helical transmembrane segment spans residues 256-276 (GVIAGGLVGLIFAVCLVGFML). Residues 277 to 311 (YRMKKKDEGSYSLEEPKQANGGAYQKPTKQEEFYA) lie on the Cytoplasmic side of the membrane. Residues 285–311 (GSYSLEEPKQANGGAYQKPTKQEEFYA) form a disordered region. Serine 286 bears the Phosphoserine mark.

This sequence belongs to the syndecan proteoglycan family. In terms of assembly, interacts with CDCP1. Interacts (via C-terminus) with TIAM1 (via PDZ domain). Interacts with MDK. In terms of processing, shedding is enhanced by a number of factors such as heparanase, thrombin or EGF. Also by stress and wound healing. PMA-mediated shedding is inhibited by TIMP3.

The protein localises to the membrane. Its subcellular location is the secreted. The protein resides in the extracellular exosome. Cell surface proteoglycan that contains both heparan sulfate and chondroitin sulfate and that links the cytoskeleton to the interstitial matrix. Regulates exosome biogenesis in concert with SDCBP and PDCD6IP. Able to induce its own expression in dental mesenchymal cells and also in the neighboring dental epithelial cells via an MSX1-mediated pathway. In Bos taurus (Bovine), this protein is Syndecan-1.